Here is a 135-residue protein sequence, read N- to C-terminus: Ribosome-binding factor A (135 aa).

Belongs to the RbfA family. As to quaternary structure, monomer. Binds 30S ribosomal subunits, but not 50S ribosomal subunits or 70S ribosomes.

The protein resides in the cytoplasm. Functionally, one of several proteins that assist in the late maturation steps of the functional core of the 30S ribosomal subunit. Associates with free 30S ribosomal subunits (but not with 30S subunits that are part of 70S ribosomes or polysomes). Required for efficient processing of 16S rRNA. May interact with the 5'-terminal helix region of 16S rRNA. This Aliivibrio fischeri (strain MJ11) (Vibrio fischeri) protein is Ribosome-binding factor A.